A 571-amino-acid polypeptide reads, in one-letter code: Urease subunit alpha (571 aa).

The Urease domain maps to 134-571 (GAIDTHIHFI…LPMAQRYFLF (438 aa)). Ni(2+) is bound by residues His139, His141, and Lys222. Residue Lys222 is modified to N6-carboxylysine. Residue His224 participates in substrate binding. His251 and His277 together coordinate Ni(2+). The Proton donor role is filled by His325. Ni(2+) is bound at residue Asp365.

This sequence belongs to the metallo-dependent hydrolases superfamily. Urease alpha subunit family. Heterotrimer of UreA (gamma), UreB (beta) and UreC (alpha) subunits. Three heterotrimers associate to form the active enzyme. The cofactor is Ni cation. In terms of processing, carboxylation allows a single lysine to coordinate two nickel ions.

It localises to the cytoplasm. The enzyme catalyses urea + 2 H2O + H(+) = hydrogencarbonate + 2 NH4(+). Its pathway is nitrogen metabolism; urea degradation; CO(2) and NH(3) from urea (urease route): step 1/1. The polypeptide is Urease subunit alpha (Bordetella bronchiseptica (strain ATCC BAA-588 / NCTC 13252 / RB50) (Alcaligenes bronchisepticus)).